Consider the following 286-residue polypeptide: Undecaprenyl-diphosphatase (286 aa).

Transmembrane regions (helical) follow at residues 17–37, 49–69, 98–118, 126–146, 159–179, 204–224, 232–252, and 261–281; these read VVLGIVQGLTEFLPISSTAHL, PGVAVTAVIQLGSIAAVIGYF, IAIAVGTLPVVVAGLLIKLFW, LRSVASIGIVSIVMALLLALA, VQGLDGVVVGLAQALAIIPGV, FLLGIPAITLAGLVELKGAFA, LPMLLGILSAAVVSWLAIAWL, and TWPFVIYRLVFGVVLLALVLA.

Belongs to the UppP family.

Its subcellular location is the cell inner membrane. It catalyses the reaction di-trans,octa-cis-undecaprenyl diphosphate + H2O = di-trans,octa-cis-undecaprenyl phosphate + phosphate + H(+). Its function is as follows. Catalyzes the dephosphorylation of undecaprenyl diphosphate (UPP). Confers resistance to bacitracin. The chain is Undecaprenyl-diphosphatase from Synechococcus sp. (strain RCC307).